A 320-amino-acid chain; its full sequence is Malate dehydrogenase (320 aa).

Residues 10-15 (GSGMIG) and aspartate 34 contribute to the NAD(+) site. Residues arginine 83 and arginine 89 each contribute to the substrate site. NAD(+)-binding positions include asparagine 96 and 119-121 (ITN). Asparagine 121 and arginine 152 together coordinate substrate. Residue histidine 176 is the Proton acceptor of the active site.

The protein belongs to the LDH/MDH superfamily. MDH type 3 family.

It carries out the reaction (S)-malate + NAD(+) = oxaloacetate + NADH + H(+). Its function is as follows. Catalyzes the reversible oxidation of malate to oxaloacetate. The sequence is that of Malate dehydrogenase from Agrobacterium fabrum (strain C58 / ATCC 33970) (Agrobacterium tumefaciens (strain C58)).